A 417-amino-acid chain; its full sequence is 4-hydroxy-3-methylbut-2-en-1-yl diphosphate synthase (flavodoxin) (417 aa).

4 residues coordinate [4Fe-4S] cluster: C305, C308, C351, and E358.

It belongs to the IspG family. [4Fe-4S] cluster serves as cofactor.

The enzyme catalyses (2E)-4-hydroxy-3-methylbut-2-enyl diphosphate + oxidized [flavodoxin] + H2O + 2 H(+) = 2-C-methyl-D-erythritol 2,4-cyclic diphosphate + reduced [flavodoxin]. It participates in isoprenoid biosynthesis; isopentenyl diphosphate biosynthesis via DXP pathway; isopentenyl diphosphate from 1-deoxy-D-xylulose 5-phosphate: step 5/6. Its function is as follows. Converts 2C-methyl-D-erythritol 2,4-cyclodiphosphate (ME-2,4cPP) into 1-hydroxy-2-methyl-2-(E)-butenyl 4-diphosphate. The sequence is that of 4-hydroxy-3-methylbut-2-en-1-yl diphosphate synthase (flavodoxin) from Nitrosomonas europaea (strain ATCC 19718 / CIP 103999 / KCTC 2705 / NBRC 14298).